The sequence spans 315 residues: Ester hydrolase C11orf54 homolog (315 aa).

Histidine 266, histidine 268, and histidine 278 together coordinate Zn(2+).

Monomer. The cofactor is Zn(2+).

It localises to the nucleus. The protein localises to the cytoplasm. Its function is as follows. Exhibits ester hydrolase activity on the substrate p-nitrophenyl acetate, in vitro. Regulates DNA damage and repair by regulating HIF1A degradation via chaperone-mediated autophagy (CMA). This is Ester hydrolase C11orf54 homolog from Mus musculus (Mouse).